Here is a 146-residue protein sequence, read N- to C-terminus: Anti-sigma F factor (146 aa).

This sequence belongs to the anti-sigma-factor family.

The catalysed reaction is L-seryl-[protein] + ATP = O-phospho-L-seryl-[protein] + ADP + H(+). It carries out the reaction L-threonyl-[protein] + ATP = O-phospho-L-threonyl-[protein] + ADP + H(+). Binds to sigma F and blocks its ability to form an RNA polymerase holoenzyme (E-sigma F). Phosphorylates SpoIIAA on a serine residue. This phosphorylation may enable SpoIIAA to act as an anti-anti-sigma factor that counteracts SpoIIAB and thus releases sigma F from inhibition. The protein is Anti-sigma F factor of Oceanobacillus iheyensis (strain DSM 14371 / CIP 107618 / JCM 11309 / KCTC 3954 / HTE831).